A 239-amino-acid chain; its full sequence is Methylthioribulose-1-phosphate dehydratase (239 aa).

Cys-94 lines the substrate pocket. Zn(2+) is bound by residues His-112 and His-114. Glu-136 acts as the Proton donor/acceptor in catalysis. His-192 lines the Zn(2+) pocket.

The protein belongs to the aldolase class II family. MtnB subfamily. Zn(2+) is required as a cofactor.

Its subcellular location is the cytoplasm. The catalysed reaction is 5-(methylsulfanyl)-D-ribulose 1-phosphate = 5-methylsulfanyl-2,3-dioxopentyl phosphate + H2O. Its pathway is amino-acid biosynthesis; L-methionine biosynthesis via salvage pathway; L-methionine from S-methyl-5-thio-alpha-D-ribose 1-phosphate: step 2/6. In terms of biological role, catalyzes the dehydration of methylthioribulose-1-phosphate (MTRu-1-P) into 2,3-diketo-5-methylthiopentyl-1-phosphate (DK-MTP-1-P). Functions in the methionine salvage pathway. May play a role in apoptosis. This is Methylthioribulose-1-phosphate dehydratase from Aquarana catesbeiana (American bullfrog).